Here is a 426-residue protein sequence, read N- to C-terminus: Mothers against decapentaplegic homolog 7 (426 aa).

Positions 14 to 40 are disordered; the sequence is WRSRAPGGEDEEEGVGGGGGGGGLRGE. Gly residues predominate over residues 28–39; it reads VGGGGGGGGLRG. An N6-acetyllysine; alternate mark is found at Lys64 and Lys70. Residues Lys64 and Lys70 each participate in a glycyl lysine isopeptide (Lys-Gly) (interchain with G-Cter in ubiquitin); alternate cross-link. Residues 64–207 form the MH1 domain; it reads KAVRGAKGHH…LSRLCELESP (144 aa). The segment covering 67–76 has biased composition (basic residues); it reads RGAKGHHHPH. A disordered region spans residues 67 to 88; sequence RGAKGHHHPHPPSSGAGAAGGA. Cys125, Cys180, Cys192, and His197 together coordinate Zn(2+). The short motif at 208 to 211 is the PY-motif element; that stretch reads PPPY. The important for interaction with SMURF2 stretch occupies residues 208-217; that stretch reads PPPYSRYPMD. Ser249 is subject to Phosphoserine. In terms of domain architecture, MH2 spans 261 to 426; that stretch reads WCVVAYWEEK…CWLEVIFNSR (166 aa).

This sequence belongs to the dwarfin/SMAD family. In terms of assembly, interacts with COPS5. Interacts with STAMBP. Interacts with NEDD4L. Interacts with RNF111, AXIN1 and AXIN2. Interacts with PPP1R15A. Interacts with ACVR1B, SMURF1, SMURF2 and TGFBR1; SMAD7 recruits SMURF1 and SMURF2 to the TGF-beta receptor and regulates its degradation. Interacts with WWP1. Interacts with PDPK1 (via PH domain). Interacts with TSC22D1/TSC-22; the interaction requires TGF-beta and the interaction is inhibited by TGFBR1. Phosphorylation on Ser-249 does not affect its stability, nuclear localization or inhibitory function in TGFB signaling; however it affects its ability to regulate transcription. Phosphorylated by PDPK1. Post-translationally, ubiquitinated by WWP1. Polyubiquitinated by RNF111, which is enhanced by AXIN1 and promotes proteasomal degradation. In response to TGF-beta, ubiquitinated by SMURF1; which promotes its degradation. In terms of processing, acetylation prevents ubiquitination and degradation mediated by SMURF1. As to expression, ubiquitous.

Its subcellular location is the nucleus. The protein resides in the cytoplasm. Its function is as follows. Antagonist of signaling by TGF-beta (transforming growth factor) type 1 receptor superfamily members; has been shown to inhibit TGF-beta (Transforming growth factor) and activin signaling by associating with their receptors thus preventing SMAD2 access. Functions as an adapter to recruit SMURF2 to the TGF-beta receptor complex. Also acts by recruiting the PPP1R15A-PP1 complex to TGFBR1, which promotes its dephosphorylation. Positively regulates PDPK1 kinase activity by stimulating its dissociation from the 14-3-3 protein YWHAQ which acts as a negative regulator. In Rattus norvegicus (Rat), this protein is Mothers against decapentaplegic homolog 7 (Smad7).